Consider the following 432-residue polypeptide: Lipoyl synthase, mitochondrial (432 aa).

Positions 32-68 are enriched in low complexity; the sequence is TLGATPGSTSTSTSTSTATTTTLESTSTSTSGDATET. Positions 32–71 are disordered; that stretch reads TLGATPGSTSTSTSTSTATTTTLESTSTSTSGDATETTIK. [4Fe-4S] cluster contacts are provided by Cys-150, Cys-155, Cys-161, Cys-180, Cys-184, Cys-187, and Ser-395. The Radical SAM core domain maps to 165–384; it reads KKSEATATIM…RDVALEMGFL (220 aa).

Belongs to the radical SAM superfamily. Lipoyl synthase family. [4Fe-4S] cluster is required as a cofactor.

Its subcellular location is the mitochondrion. The catalysed reaction is [[Fe-S] cluster scaffold protein carrying a second [4Fe-4S](2+) cluster] + N(6)-octanoyl-L-lysyl-[protein] + 2 oxidized [2Fe-2S]-[ferredoxin] + 2 S-adenosyl-L-methionine + 4 H(+) = [[Fe-S] cluster scaffold protein] + N(6)-[(R)-dihydrolipoyl]-L-lysyl-[protein] + 4 Fe(3+) + 2 hydrogen sulfide + 2 5'-deoxyadenosine + 2 L-methionine + 2 reduced [2Fe-2S]-[ferredoxin]. Its pathway is protein modification; protein lipoylation via endogenous pathway; protein N(6)-(lipoyl)lysine from octanoyl-[acyl-carrier-protein]: step 2/2. Its function is as follows. Catalyzes the radical-mediated insertion of two sulfur atoms into the C-6 and C-8 positions of the octanoyl moiety bound to the lipoyl domains of lipoate-dependent enzymes, thereby converting the octanoylated domains into lipoylated derivatives. This chain is Lipoyl synthase, mitochondrial, found in Lodderomyces elongisporus (strain ATCC 11503 / CBS 2605 / JCM 1781 / NBRC 1676 / NRRL YB-4239) (Yeast).